The chain runs to 239 residues: MRVHFVVHESFESAGAYLKWAEDRGYTISWSRVYAGEALPPNADEFDMLVVFGGPQSPRTTREECPYFDSRAEQHLINQAVTARRMVIGICLGSQLIGEALGAAVCQSPEKEIGHYPITLTEAGLRHPLIAHFGSPLTVGHWHNDMPGLTDQATVLAESEGCPRQIVQYGNFVYGFQCHMEFTVEAVEGLIQHSQQELADAQGKRFIRSVAEMRAWNYQQMNEKLWRFLDELTLAHSQK.

In terms of domain architecture, Glutamine amidotransferase type-1 spans 1-200; the sequence is MRVHFVVHES…IQHSQQELAD (200 aa).

This chain is Putative glutamine amidotransferase-like protein YfeJ (yfeJ), found in Salmonella typhimurium (strain LT2 / SGSC1412 / ATCC 700720).